We begin with the raw amino-acid sequence, 179 residues long: Large ribosomal subunit protein uL6 (179 aa).

It belongs to the universal ribosomal protein uL6 family. As to quaternary structure, part of the 50S ribosomal subunit.

This protein binds to the 23S rRNA, and is important in its secondary structure. It is located near the subunit interface in the base of the L7/L12 stalk, and near the tRNA binding site of the peptidyltransferase center. This chain is Large ribosomal subunit protein uL6, found in Treponema pallidum (strain Nichols).